A 548-amino-acid polypeptide reads, in one-letter code: Glucose-6-phosphate isomerase 1 (548 aa).

Catalysis depends on Glu-353, which acts as the Proton donor. Residues His-384 and Lys-512 contribute to the active site.

The protein belongs to the GPI family.

It localises to the cytoplasm. It catalyses the reaction alpha-D-glucose 6-phosphate = beta-D-fructose 6-phosphate. It functions in the pathway carbohydrate biosynthesis; gluconeogenesis. The protein operates within carbohydrate degradation; glycolysis; D-glyceraldehyde 3-phosphate and glycerone phosphate from D-glucose: step 2/4. In terms of biological role, catalyzes the reversible isomerization of glucose-6-phosphate to fructose-6-phosphate. The protein is Glucose-6-phosphate isomerase 1 of Neisseria gonorrhoeae (strain ATCC 700825 / FA 1090).